A 198-amino-acid polypeptide reads, in one-letter code: Probable molybdenum cofactor guanylyltransferase (198 aa).

GTP is bound by residues 9–11 (LAG), Lys22, Asp66, and Asp95. Asp95 serves as a coordination point for Mg(2+).

It belongs to the MobA family. Mg(2+) is required as a cofactor.

It localises to the cytoplasm. It carries out the reaction Mo-molybdopterin + GTP + H(+) = Mo-molybdopterin guanine dinucleotide + diphosphate. Transfers a GMP moiety from GTP to Mo-molybdopterin (Mo-MPT) cofactor (Moco or molybdenum cofactor) to form Mo-molybdopterin guanine dinucleotide (Mo-MGD) cofactor. The protein is Probable molybdenum cofactor guanylyltransferase of Clostridium perfringens (strain ATCC 13124 / DSM 756 / JCM 1290 / NCIMB 6125 / NCTC 8237 / Type A).